Here is a 383-residue protein sequence, read N- to C-terminus: MTVLSEKELIQIRRHLHEIPELALQEKETHDYLLKVIKNLKQDHLTIVVPKTLPTAILGLVKGINPKKTIGYRTDIDALPVQEKTGLPFTSKHSGIMHACGHDIHMTVALGLLSYFSENQPKDNLLFFFQPAEESESGGKQAYEKGLFQGKFKPDEFYGLHDNPELPAGSIGCRMGTLFAGTTEINIDVIGKSGHAAFPQNANDTVVAAANLIMQIQTIISRSIDPIQSGVITLGKVNAGVIRNVIAGHTRIEGTIRGLTQKMILQIDRRLQDVCDGIAHSYNVEVNLELNQGGYWPVENDPKITKNFISYMKKNPKVNFIETEPKMTGEDFGFLLAKFPGTMFWLGVGDPSSQLHSSTLNPDEKSIQSGIDAIKGFLIDRMG.

Residue Asp-75 is part of the active site. Glu-134 (proton acceptor) is an active-site residue.

The protein belongs to the peptidase M20A family. N-acetyldiaminopimelate deacetylase subfamily.

The enzyme catalyses N-acetyl-(2S,6S)-2,6-diaminopimelate + H2O = (2S,6S)-2,6-diaminopimelate + acetate. The protein operates within amino-acid biosynthesis; L-lysine biosynthesis via DAP pathway; LL-2,6-diaminopimelate from (S)-tetrahydrodipicolinate (acetylase route): step 3/3. Catalyzes the conversion of N-acetyl-diaminopimelate to diaminopimelate and acetate. This Lactobacillus acidophilus (strain ATCC 700396 / NCK56 / N2 / NCFM) protein is N-acetyldiaminopimelate deacetylase.